A 157-amino-acid polypeptide reads, in one-letter code: Transcription antitermination protein NusB (157 aa).

The protein belongs to the NusB family.

Functionally, involved in transcription antitermination. Required for transcription of ribosomal RNA (rRNA) genes. Binds specifically to the boxA antiterminator sequence of the ribosomal RNA (rrn) operons. This Xylella fastidiosa (strain M12) protein is Transcription antitermination protein NusB.